Consider the following 220-residue polypeptide: Thiopurine S-methyltransferase (220 aa).

Residues Trp10, Leu45, Glu66, and Arg123 each contribute to the S-adenosyl-L-methionine site.

It belongs to the class I-like SAM-binding methyltransferase superfamily. TPMT family.

It localises to the cytoplasm. It carries out the reaction S-adenosyl-L-methionine + a thiopurine = S-adenosyl-L-homocysteine + a thiopurine S-methylether.. This chain is Thiopurine S-methyltransferase, found in Nitrosospira multiformis (strain ATCC 25196 / NCIMB 11849 / C 71).